The chain runs to 277 residues: Inositol monophosphatase 1 (277 aa).

Positions 70, 90, 92, and 93 each coordinate Mg(2+). A substrate-binding site is contributed by E70. 92–95 (IDGT) provides a ligand contact to substrate. At T168 the chain carries Phosphothreonine. Substrate-binding positions include 194–196 (GTA), E213, and D220. Position 220 (D220) interacts with Mg(2+).

Belongs to the inositol monophosphatase superfamily. As to quaternary structure, homodimer. Mg(2+) serves as cofactor.

The protein localises to the cytoplasm. The catalysed reaction is a myo-inositol phosphate + H2O = myo-inositol + phosphate. It catalyses the reaction 1D-myo-inositol 1-phosphate + H2O = myo-inositol + phosphate. The enzyme catalyses 1D-myo-inositol 2-phosphate + H2O = myo-inositol + phosphate. It carries out the reaction 1D-myo-inositol 3-phosphate + H2O = myo-inositol + phosphate. The catalysed reaction is 1D-myo-inositol 4-phosphate + H2O = myo-inositol + phosphate. It catalyses the reaction 1D-myo-inositol 5-phosphate + H2O = myo-inositol + phosphate. The enzyme catalyses 1D-myo-inositol 6-phosphate + H2O = myo-inositol + phosphate. It carries out the reaction scyllo-inositol 1-phosphate + H2O = scyllo-inositol + phosphate. The catalysed reaction is alpha-D-galactose 1-phosphate + H2O = D-galactose + phosphate. It catalyses the reaction alpha-D-glucose 1-phosphate + H2O = D-glucose + phosphate. The enzyme catalyses D-glucose 6-phosphate + H2O = D-glucose + phosphate. It carries out the reaction beta-D-fructose 1-phosphate + H2O = D-fructose + phosphate. The catalysed reaction is glycerol 2-phosphate + H2O = glycerol + phosphate. It catalyses the reaction adenosine 2'-phosphate + H2O = adenosine + phosphate. It participates in polyol metabolism; myo-inositol biosynthesis; myo-inositol from D-glucose 6-phosphate: step 2/2. Its activity is regulated as follows. Inhibited by Li(+), Ca(2+) and Mn(2+), but also by Mg(2+) at concentrations above 3 mM. Its function is as follows. Phosphatase involved in the dephosphorylation of myo-inositol monophosphate to generate myo-inositol. Is also able to dephosphorylate scyllo-inositol-phosphate, myo-inositol 1,4-diphosphate, scyllo-inositol-1,3-diphosphate and scyllo-inositol-1,4-diphosphate. Also dephosphorylates in vitro other sugar-phosphates including D-galactose-1-phosphate, glucose-1-phosphate, glucose-6-phosphate, fructose-1-phosphate, beta-glycerophosphate and 2'-AMP. Responsible for the provision of inositol required for synthesis of phosphatidylinositol and polyphosphoinositides, and involved in maintaining normal brain function. Has been implicated as the pharmacological target for lithium Li(+) action in brain. The sequence is that of Inositol monophosphatase 1 (IMPA1) from Sus scrofa (Pig).